The primary structure comprises 266 residues: Protein crossbronx-like (266 aa).

In terms of domain architecture, UBC core spans 15–178; sequence KQGYHILAEY…VQEQAIASRN (164 aa).

It belongs to the ubiquitin-conjugating enzyme family. FTS subfamily.

This chain is Protein crossbronx-like, found in Drosophila yakuba (Fruit fly).